Consider the following 400-residue polypeptide: Tektin-B1 (400 aa).

3 coiled-coil regions span residues 35–81 (TRLS…AKAL), 236–294 (FALR…LENR), and 310–353 (GLVN…LELK).

The protein belongs to the tektin family. In terms of assembly, may form a heterodimer with tektin a or exist as a homodimer. As to expression, cilia and flagella.

It localises to the cytoplasm. It is found in the cytoskeleton. Its function is as follows. Structural component of ciliary and flagellar microtubules. The polypeptide is Tektin-B1 (Strongylocentrotus purpuratus (Purple sea urchin)).